Here is a 271-residue protein sequence, read N- to C-terminus: Phosphonates import ATP-binding protein PhnC 2 (271 aa).

The 245-residue stretch at 2–246 (LTVDNLEKTY…ARDEIYRGGE (245 aa)) folds into the ABC transporter domain. 35–42 (GPSGAGKS) provides a ligand contact to ATP. Positions 243–254 (RGGESIADREEP) are enriched in basic and acidic residues. Positions 243 to 271 (RGGESIADREEPSAGNSTDADDVIAERGD) are disordered.

The protein belongs to the ABC transporter superfamily. Phosphonates importer (TC 3.A.1.9.1) family. As to quaternary structure, the complex is composed of two ATP-binding proteins (PhnC), two transmembrane proteins (PhnE) and a solute-binding protein (PhnD).

Its subcellular location is the cell membrane. The enzyme catalyses phosphonate(out) + ATP + H2O = phosphonate(in) + ADP + phosphate + H(+). Its function is as follows. Part of the ABC transporter complex PhnCDE involved in phosphonates import. Responsible for energy coupling to the transport system. The sequence is that of Phosphonates import ATP-binding protein PhnC 2 from Haloarcula marismortui (strain ATCC 43049 / DSM 3752 / JCM 8966 / VKM B-1809) (Halobacterium marismortui).